The chain runs to 406 residues: Phosphopentomutase (406 aa).

Mn(2+)-binding residues include Asp10, Asp305, His310, Asp346, His347, and His358.

Belongs to the phosphopentomutase family. Mn(2+) serves as cofactor.

The protein resides in the cytoplasm. The enzyme catalyses 2-deoxy-alpha-D-ribose 1-phosphate = 2-deoxy-D-ribose 5-phosphate. The catalysed reaction is alpha-D-ribose 1-phosphate = D-ribose 5-phosphate. The protein operates within carbohydrate degradation; 2-deoxy-D-ribose 1-phosphate degradation; D-glyceraldehyde 3-phosphate and acetaldehyde from 2-deoxy-alpha-D-ribose 1-phosphate: step 1/2. In terms of biological role, isomerase that catalyzes the conversion of deoxy-ribose 1-phosphate (dRib-1-P) and ribose 1-phosphate (Rib-1-P) to deoxy-ribose 5-phosphate (dRib-5-P) and ribose 5-phosphate (Rib-5-P), respectively. This chain is Phosphopentomutase, found in Photobacterium profundum (strain SS9).